The sequence spans 273 residues: Large ribosomal subunit protein uL2 (273 aa).

The interval V228–K273 is disordered. The segment covering K254–K273 has biased composition (basic residues).

Belongs to the universal ribosomal protein uL2 family. Part of the 50S ribosomal subunit. Forms a bridge to the 30S subunit in the 70S ribosome.

Functionally, one of the primary rRNA binding proteins. Required for association of the 30S and 50S subunits to form the 70S ribosome, for tRNA binding and peptide bond formation. It has been suggested to have peptidyltransferase activity; this is somewhat controversial. Makes several contacts with the 16S rRNA in the 70S ribosome. The chain is Large ribosomal subunit protein uL2 from Rickettsia prowazekii (strain Madrid E).